A 1193-amino-acid polypeptide reads, in one-letter code: Nucleolar protein 6 (1193 aa).

Disordered regions lie at residues 1–69 and 1137–1193; these read MRFV…TKNV and KREQ…KVLK. Basic and acidic residues-rich tracts occupy residues 31 to 46 and 1151 to 1161; these read AGDH…KIAK and DANKAEEESKP. A Phosphoserine modification is found at Ser-35. A compositionally biased stretch (basic residues) spans 1162–1184; the sequence is KPKKHRQRKGTGKKALPKRKRLI.

This sequence belongs to the NRAP family. In terms of assembly, part of the small subunit (SSU) processome, composed of more than 70 proteins and the RNA chaperone small nucleolar RNA (snoRNA) U3. Expressed in nurse cells at stages 9-10 of oogenesis and exported to the oocyte.

The protein resides in the nucleus. The protein localises to the nucleolus. It localises to the chromosome. Functionally, part of the small subunit (SSU) processome, first precursor of the small eukaryotic ribosomal subunit. During the assembly of the SSU processome in the nucleolus, many ribosome biogenesis factors, an RNA chaperone and ribosomal proteins associate with the nascent pre-rRNA and work in concert to generate RNA folding, modifications, rearrangements and cleavage as well as targeted degradation of pre-ribosomal RNA by the RNA exosome. In Drosophila melanogaster (Fruit fly), this protein is Nucleolar protein 6.